A 285-amino-acid chain; its full sequence is Glutamate racemase (285 aa).

Residues 28-29 (DS) and 60-61 (YG) contribute to the substrate site. Residue Cys-92 is the Proton donor/acceptor of the active site. 93-94 (NT) contributes to the substrate binding site. Cys-204 acts as the Proton donor/acceptor in catalysis. 205–206 (TH) is a binding site for substrate.

The protein belongs to the aspartate/glutamate racemases family.

The catalysed reaction is L-glutamate = D-glutamate. It functions in the pathway cell wall biogenesis; peptidoglycan biosynthesis. In terms of biological role, provides the (R)-glutamate required for cell wall biosynthesis. In Escherichia coli O6:H1 (strain CFT073 / ATCC 700928 / UPEC), this protein is Glutamate racemase.